Consider the following 79-residue polypeptide: Acyl carrier protein (79 aa).

Residues 2 to 77 form the Carrier domain; sequence SEVADKVKKI…DAVEYIEKQK (76 aa). Ser37 bears the O-(pantetheine 4'-phosphoryl)serine mark.

The protein belongs to the acyl carrier protein (ACP) family. Post-translationally, 4'-phosphopantetheine is transferred from CoA to a specific serine of apo-ACP by AcpS. This modification is essential for activity because fatty acids are bound in thioester linkage to the sulfhydryl of the prosthetic group.

The protein resides in the cytoplasm. Its pathway is lipid metabolism; fatty acid biosynthesis. In terms of biological role, carrier of the growing fatty acid chain in fatty acid biosynthesis. This is Acyl carrier protein from Granulibacter bethesdensis (strain ATCC BAA-1260 / CGDNIH1).